A 150-amino-acid chain; its full sequence is Protein Turandot X (150 aa).

The N-terminal stretch at 1-22 is a signal peptide; the sequence is MGLHIGSLLICVFLGILPFATA. The tract at residues 127-150 is disordered; the sequence is REEGQSNHANSPTTLPSRIQKMTK. Positions 132 to 150 are enriched in polar residues; that stretch reads SNHANSPTTLPSRIQKMTK.

The protein belongs to the Turandot family.

It localises to the secreted. In terms of biological role, a humoral factor that may play a role in stress tolerance. This Drosophila simulans (Fruit fly) protein is Protein Turandot X.